The following is a 170-amino-acid chain: Large ribosomal subunit protein uL11 (170 aa).

It belongs to the universal ribosomal protein uL11 family. In terms of assembly, part of the ribosomal stalk of the 50S ribosomal subunit. Interacts with L10 and the large rRNA to form the base of the stalk. L10 forms an elongated spine to which L12 dimers bind in a sequential fashion forming a multimeric L10(L12)X complex.

Functionally, forms part of the ribosomal stalk which helps the ribosome interact with GTP-bound translation factors. This Saccharolobus islandicus (strain M.14.25 / Kamchatka #1) (Sulfolobus islandicus) protein is Large ribosomal subunit protein uL11.